The sequence spans 213 residues: Kynurenine formamidase (213 aa).

W18 contacts substrate. Residues H48, H52, and D54 each coordinate Zn(2+). The Proton donor/acceptor role is filled by H58. H160 and E172 together coordinate Zn(2+).

It belongs to the Cyclase 1 superfamily. KynB family. In terms of assembly, homodimer. It depends on Zn(2+) as a cofactor.

It carries out the reaction N-formyl-L-kynurenine + H2O = L-kynurenine + formate + H(+). The protein operates within amino-acid degradation; L-tryptophan degradation via kynurenine pathway; L-kynurenine from L-tryptophan: step 2/2. Its function is as follows. Catalyzes the hydrolysis of N-formyl-L-kynurenine to L-kynurenine, the second step in the kynurenine pathway of tryptophan degradation. The chain is Kynurenine formamidase from Burkholderia mallei (strain NCTC 10247).